A 558-amino-acid chain; its full sequence is Potassium-transporting ATPase potassium-binding subunit 2 (558 aa).

12 helical membrane-spanning segments follow: residues 1 to 21 (MSIV…SRYL), 60 to 80 (IKHF…LLLI), 129 to 149 (VITF…IAML), 169 to 189 (FIVR…ISQG), 246 to 266 (WSNY…VFLF), 281 to 301 (IMIF…CLYF), 326 to 346 (FGIG…TGTV), 353 to 373 (LTPL…VFGG), 376 to 396 (VGLM…SLMI), 415 to 435 (IALS…LAFI), 485 to 505 (IVML…VSSL), and 523 to 543 (LFFS…TFLP).

It belongs to the KdpA family. In terms of assembly, the system is composed of three essential subunits: KdpA, KdpB and KdpC.

It is found in the cell membrane. In terms of biological role, part of the high-affinity ATP-driven potassium transport (or Kdp) system, which catalyzes the hydrolysis of ATP coupled with the electrogenic transport of potassium into the cytoplasm. This subunit binds the extracellular potassium ions and delivers the ions to the membrane domain of KdpB through an intramembrane tunnel. The protein is Potassium-transporting ATPase potassium-binding subunit 2 of Staphylococcus aureus (strain Mu50 / ATCC 700699).